A 156-amino-acid chain; its full sequence is MQHSQVSPNARQQLAETVVLNKARLGLSWQDLADGTGIALTLVTAAMFGQHALPEAAARKVAAQLGMDDDAVLLLQSIPLRGSIPGGIPSDPTIYRFYEMLQVYGSTLKALVHEQFGDGIISAINFKLDIKKVEDPEGGSRAVITLDGKYLPTKPF.

Residues Arg96, Glu99, and Ser122 contribute to the active site.

This sequence belongs to the cyanase family.

The enzyme catalyses cyanate + hydrogencarbonate + 3 H(+) = NH4(+) + 2 CO2. In terms of biological role, catalyzes the reaction of cyanate with bicarbonate to produce ammonia and carbon dioxide. This Pseudomonas aeruginosa (strain UCBPP-PA14) protein is Cyanate hydratase.